The primary structure comprises 266 residues: MARNSRIRITNNDKALYAKLVKNTKAKISRTKKKYGIDLSNEIELPPLESFQTREEFNKWKQKQESFTNRANQNYQFVKNKYGIVASKAKINEIAKNTKEAQRIVDEQREEIEDKPFISGGKQQGTVGQRMQILSPSQVTGISRPSDFNFDDVRSYARLRTLEEGMAEKASPDYYDRRMTQMHQNFIEIVEKSFNSDWLSDELVERLKKIPPDDFFELYLMFDEISFEYFDSEGEDVEASEAMLNKIHSYLDRYERGDVNLDLKGF.

A disordered region spans residues 1–73; sequence MARNSRIRIT…QESFTNRANQ (73 aa). Residues 25–34 carry the Nuclear localization signal motif; sequence KAKISRTKKK. Residues 74–172 form an intermediate; makes extensive contacts with the phage DNA polymerase region; that stretch reads NYQFVKNKYG…EEGMAEKASP (99 aa). Positions 173-266 are priming; sequence DYYDRRMTQM…GDVNLDLKGF (94 aa). Ser-232 carries the post-translational modification O-(5'-phospho-DNA)-serine. An interaction with the viral DNA polymerase region spans residues 256 to 258; that stretch reads RGD.

Belongs to the phi29likevirus DNA terminal protein family. Interacts with the viral polymerase; this interaction allows the initiation of TP-primed DNA replication at both viral DNA ends. Binds to ssDNA. Interacts with the replication protein p1. Part of a DNA-gp3-gp16 complex.

It is found in the virion. It localises to the host nucleus. Its function is as follows. Acts as a primer for DNA elongation during viral genomic replication. Acts as the small terminase protein during packaging. Recruits the phage DNA polymerase to the bacterial nucleoid. Primer terminal protein (TP) is covalently linked to the 5'-ends of both strands of the genome through a phosphodiester bond between the beta-hydroxyl group of a serine residue and the 5'-phosphate of the terminal deoxyadenylate (dAMP). To start replication, the DNA polymerase forms a heterodimer with a free TP that recognizes the replication origins at both 5' ends of the linear chromosome, and initiates replication using as primer the OH-group of Ser-232 of the TP. Since the polymerase initiates the replication on the second thymine, the TP-dAMP initiation product slides backwards to recover the template information of the first nucleotide. Hydrolyzes host peptidoglycans during virus entry. In Bacillus phage Nf (Bacteriophage Nf), this protein is DNA terminal protein (3).